Reading from the N-terminus, the 1389-residue chain is DNA-directed RNA polymerase subunit beta'' (1389 aa).

Positions 220, 290, 297, and 300 each coordinate Zn(2+).

Belongs to the RNA polymerase beta' chain family. RpoC2 subfamily. As to quaternary structure, in plastids the minimal PEP RNA polymerase catalytic core is composed of four subunits: alpha, beta, beta', and beta''. When a (nuclear-encoded) sigma factor is associated with the core the holoenzyme is formed, which can initiate transcription. Zn(2+) is required as a cofactor.

It is found in the plastid. The protein localises to the chloroplast. The catalysed reaction is RNA(n) + a ribonucleoside 5'-triphosphate = RNA(n+1) + diphosphate. DNA-dependent RNA polymerase catalyzes the transcription of DNA into RNA using the four ribonucleoside triphosphates as substrates. In Chloranthus spicatus (Chulantree), this protein is DNA-directed RNA polymerase subunit beta''.